Here is a 96-residue protein sequence, read N- to C-terminus: Phosphoribosyl-ATP pyrophosphatase (96 aa).

The protein belongs to the PRA-PH family.

The protein localises to the cytoplasm. It carries out the reaction 1-(5-phospho-beta-D-ribosyl)-ATP + H2O = 1-(5-phospho-beta-D-ribosyl)-5'-AMP + diphosphate + H(+). It functions in the pathway amino-acid biosynthesis; L-histidine biosynthesis; L-histidine from 5-phospho-alpha-D-ribose 1-diphosphate: step 2/9. This is Phosphoribosyl-ATP pyrophosphatase from Methanococcus maripaludis (strain C5 / ATCC BAA-1333).